A 211-amino-acid polypeptide reads, in one-letter code: Dephospho-CoA kinase (211 aa).

Positions 3 to 206 (VLGLTGGIGS…PGMKGPDPHA (204 aa)) constitute a DPCK domain. 11–16 (GSGKSI) serves as a coordination point for ATP.

Belongs to the CoaE family.

It is found in the cytoplasm. It carries out the reaction 3'-dephospho-CoA + ATP = ADP + CoA + H(+). It functions in the pathway cofactor biosynthesis; coenzyme A biosynthesis; CoA from (R)-pantothenate: step 5/5. In terms of biological role, catalyzes the phosphorylation of the 3'-hydroxyl group of dephosphocoenzyme A to form coenzyme A. The sequence is that of Dephospho-CoA kinase from Syntrophotalea carbinolica (strain DSM 2380 / NBRC 103641 / GraBd1) (Pelobacter carbinolicus).